Consider the following 487-residue polypeptide: L-tartrate/succinate antiporter (487 aa).

A run of 14 helical transmembrane segments spans residues 10–30 (YLAP…AGLE), 33–53 (TWLY…EPVP), 54–74 (GAVV…WLLF), 93–113 (WAVS…FMFG), 137–157 (TLFL…VTPS), 189–209 (IGSY…AIFL), 236–256 (FLGM…LAYV), 292–312 (LMVG…AAMV), 313–333 (GYSV…DIVS), 340–360 (VFFW…TGFI), 370–390 (SLSG…FYLL), 393–413 (FFAS…AAAL), 418–438 (IPLP…SILT), and 465–485 (IFGL…MPVV).

The protein belongs to the SLC13A/DASS transporter (TC 2.A.47) family. DIT1 subfamily.

It is found in the cell inner membrane. It catalyses the reaction (2R,3R)-tartrate(out) + succinate(in) = (2R,3R)-tartrate(in) + succinate(out). In terms of biological role, catalyzes the uptake of tartrate in exchange for intracellular succinate. Essential for anaerobic L-tartrate fermentation. The polypeptide is L-tartrate/succinate antiporter (ttdT) (Shigella flexneri).